The following is a 107-amino-acid chain: Nucleoid-associated protein NE0434 (107 aa).

Belongs to the YbaB/EbfC family. As to quaternary structure, homodimer.

The protein resides in the cytoplasm. It localises to the nucleoid. Its function is as follows. Binds to DNA and alters its conformation. May be involved in regulation of gene expression, nucleoid organization and DNA protection. In Nitrosomonas europaea (strain ATCC 19718 / CIP 103999 / KCTC 2705 / NBRC 14298), this protein is Nucleoid-associated protein NE0434.